The chain runs to 369 residues: Geranylgeranyl pyrophosphate synthase, chloroplastic (369 aa).

Isopentenyl diphosphate-binding residues include lysine 118, arginine 121, and histidine 150. Mg(2+) is bound by residues aspartate 157 and aspartate 163. A dimethylallyl diphosphate-binding site is contributed by arginine 168. Arginine 169 contributes to the isopentenyl diphosphate binding site. Dimethylallyl diphosphate is bound by residues lysine 254, threonine 255, glutamine 292, lysine 309, and lysine 319.

It belongs to the FPP/GGPP synthase family. In terms of assembly, monomer. Requires Mg(2+) as cofactor.

Its subcellular location is the plastid. The protein resides in the chloroplast. It catalyses the reaction isopentenyl diphosphate + dimethylallyl diphosphate = (2E)-geranyl diphosphate + diphosphate. The enzyme catalyses isopentenyl diphosphate + (2E)-geranyl diphosphate = (2E,6E)-farnesyl diphosphate + diphosphate. The catalysed reaction is isopentenyl diphosphate + (2E,6E)-farnesyl diphosphate = (2E,6E,10E)-geranylgeranyl diphosphate + diphosphate. It participates in isoprenoid biosynthesis; farnesyl diphosphate biosynthesis; farnesyl diphosphate from geranyl diphosphate and isopentenyl diphosphate: step 1/1. Its pathway is isoprenoid biosynthesis; geranyl diphosphate biosynthesis; geranyl diphosphate from dimethylallyl diphosphate and isopentenyl diphosphate: step 1/1. The protein operates within isoprenoid biosynthesis; geranylgeranyl diphosphate biosynthesis; geranylgeranyl diphosphate from farnesyl diphosphate and isopentenyl diphosphate: step 1/1. Catalyzes the trans-addition of the three molecules of IPP onto DMAPP to form geranylgeranyl pyrophosphate. The protein is Geranylgeranyl pyrophosphate synthase, chloroplastic of Capsicum annuum (Capsicum pepper).